A 1088-amino-acid polypeptide reads, in one-letter code: DEAD-box ATP-dependent RNA helicase 40 (1088 aa).

3 disordered regions span residues 1-28, 47-178, and 192-254; these read MATT…PWKG, TQYE…QYAH, and TQGL…QNTH. At Ala2 the chain carries N-acetylalanine. The 35-residue stretch at 20–54 folds into the WW domain; sequence PTLPQPWKGLIDGSTGILYYWNPETNVTQYERPSA. Low complexity-rich tracts occupy residues 87 to 137, 148 to 171, and 200 to 215; these read VGHV…SQSM, QTYQ…MPQQ, and QTPQ…PSQQ. The segment covering 222–231 has biased composition (basic and acidic residues); that stretch reads PKREGDEFHG. Positions 236-254 are enriched in polar residues; it reads GFSQPHLPNSERSPSQNTH. The short motif at 435 to 463 is the Q motif element; sequence ITFESSGLPPEILRELLSAGFPSPTPIQA. A Helicase ATP-binding domain is found at 466–640; sequence WPIALQSRDI…SDLLVNPVQV (175 aa). 479 to 486 serves as a coordination point for ATP; that stretch reads AKTGSGKT. The short motif at 588-591 is the DEAD box element; that stretch reads DEAD. Positions 669-813 constitute a Helicase C-terminal domain; sequence RLEQILRSQE…QVPPQVRDIA (145 aa). 4 stretches are compositionally biased toward gly residues: residues 861–885, 893–902, 911–920, and 932–944; these read EGGF…GGRF, GRGGNRGRGF, NVGGRGGFGR, and FGRG…GRGV. The interval 861 to 1033 is disordered; it reads EGGFGGREGG…RRDRAPRVSG (173 aa). A compositionally biased stretch (basic and acidic residues) spans 945–963; sequence GRFDNRRGRSRSRSPDLVR. The span at 969-983 shows a compositional bias: low complexity; the sequence is SSYSRSRSRSGSYSR. Residues 984–1013 show a composition bias toward basic residues; the sequence is SRSRSRSWSRSRSRSPRHSRDRGGHNRSRS.

It belongs to the DEAD box helicase family. DDX5/DBP2 subfamily.

It is found in the nucleus. It catalyses the reaction ATP + H2O = ADP + phosphate + H(+). Its function is as follows. ATP-dependent RNA helicase involved nonsense-mediated mRNA decay and ribosome biogenesis through rRNA processing. The chain is DEAD-box ATP-dependent RNA helicase 40 (RH40) from Arabidopsis thaliana (Mouse-ear cress).